The sequence spans 24 residues: Attacin (24 aa).

The protein belongs to the attacin/sarcotoxin-2 family.

The protein localises to the secreted. In terms of biological role, hemolymph antibacterial protein. The sequence is that of Attacin from Heliothis virescens (Tobacco budworm moth).